A 752-amino-acid polypeptide reads, in one-letter code: Double zinc ribbon and ankyrin repeat-containing protein 1 (752 aa).

2 consecutive DZANK-type zinc fingers follow at residues cysteine 210 to glutamate 270 and cysteine 338 to glycine 386. Residues lysine 448 to proline 469 show a composition bias toward basic and acidic residues. Disordered regions lie at residues lysine 448–leucine 471 and proline 536–glutamate 614. A compositionally biased stretch (low complexity) spans proline 536 to serine 554. Positions glutamate 555–serine 580 are enriched in polar residues. The span at proline 600–glutamate 614 shows a compositional bias: basic and acidic residues. ANK repeat units lie at residues aspartate 638–glutamine 667, leucine 672–lysine 703, and arginine 707–leucine 737.

It localises to the cytoplasm. Its subcellular location is the cytoskeleton. The protein localises to the microtubule organizing center. The protein resides in the centrosome. It is found in the cilium basal body. Functionally, required for the intracellular transport of organelles and vesicles, and is essential for the photoreceptor's outer segments formation, maintenance and function. This is Double zinc ribbon and ankyrin repeat-containing protein 1 (dzank1) from Danio rerio (Zebrafish).